The chain runs to 75 residues: Exodeoxyribonuclease 7 small subunit (75 aa).

It belongs to the XseB family. Heterooligomer composed of large and small subunits.

The protein localises to the cytoplasm. It catalyses the reaction Exonucleolytic cleavage in either 5'- to 3'- or 3'- to 5'-direction to yield nucleoside 5'-phosphates.. In terms of biological role, bidirectionally degrades single-stranded DNA into large acid-insoluble oligonucleotides, which are then degraded further into small acid-soluble oligonucleotides. The sequence is that of Exodeoxyribonuclease 7 small subunit from Elusimicrobium minutum (strain Pei191).